Consider the following 499-residue polypeptide: MALPTLSAHWPSRVRTLEQQLVRQREQEARLRRQWEQHSQYFREQDVRSSKQAQWSSRQSFHRSMSAFQRDRMREEKQRKLEERRERLRTMLQEERDQLEAELRNIHPDRDTLARQLVEKTDALRSAREERRKNLAQELLREHWKQNNSQLRKVESELHKDHIVSQWQVQQQEKKQADERTQEEKQRFENEYERTRQEALERMRKEEENRKWEEKKRAEELLKQMEELKLREQEAERLKQEQETLMSKRWELEKLEDERKMMEESRRKTEFGRFLTRQYRAQLKRRAQQVQEELEADRKILAALLEGELDEQRFHKARRERAVADAAWMKRVIEEQLQLEREREAEFDILYREEAQRVWEKREAEWEKERRARERLMREVLAGRQQQLQERMQENRLAREESLQRREELLQQLEQDRLTLRLEKEQQEGLRTARIQEIDNQVEQRRKEQWEQQQTLEQEEAQEREELRLQEEELRLETDRMIRQGFQERIHSRPRSAWT.

Positions 12 to 38 form a coiled coil; sequence SRVRTLEQQLVRQREQEARLRRQWEQH. Disordered stretches follow at residues 46 to 78 and 169 to 209; these read DVRS…EEKQ and VQQQ…EEEN. The segment covering 50-67 has biased composition (polar residues); that stretch reads SKQAQWSSRQSFHRSMSA. 2 stretches are compositionally biased toward basic and acidic residues: residues 69 to 78 and 172 to 209; these read QRDRMREEKQ and QEKK…EEEN. Coiled-coil stretches lie at residues 71 to 133, 168 to 306, and 359 to 484; these read DRMR…ERRK, QVQQ…ALLE, and WEKR…MIRQ. Residues 74–499 are interaction with keratin proteins; sequence REEKQRKLEE…IHSRPRSAWT (426 aa). The trichohyalin/plectin homology domain stretch occupies residues 260-426; the sequence is KMMEESRRKT…RLTLRLEKEQ (167 aa).

It belongs to the TCHP family.

The protein resides in the cytoplasm. The protein localises to the cytoskeleton. It is found in the microtubule organizing center. It localises to the centrosome. May act as a 'capping' or 'branching' protein for keratin filaments in the cell periphery. May regulate K8/K18 filament and desmosome organization mainly at the apical or peripheral regions of simple epithelial cells. This Danio rerio (Zebrafish) protein is Trichoplein keratin filament-binding protein.